The sequence spans 371 residues: Barbiturase 1 (371 aa).

An RU A region spans residues 1-103 (MPDAIEVRKV…TIFATVPPED (103 aa)). Residues R53 and 82–83 (SG) contribute to the substrate site. The segment at 115-250 (RLTVGFAMSE…AQVVVVGNAP (136 aa)) is RU B. K165 is an active-site residue. Substrate is bound by residues N197 and 233-234 (SS). Catalysis depends on S233, which acts as the Nucleophile. Residues 256–371 (YRIGHSVMKD…GPVAAIVDLG (116 aa)) are RU C. E304 contributes to the Mg(2+) binding site. Residues K331 and 350-351 (SV) each bind substrate. Residues A353, Q356, G357, P358, and G361 each coordinate Mg(2+).

The protein belongs to the cyclic amide hydrolase (CyAH) family. As to quaternary structure, homotetramer.

The enzyme catalyses barbiturate + H2O = 3-oxo-3-ureidopropanoate. It functions in the pathway pyrimidine metabolism; uracil degradation via oxidative pathway; malonate and urea from uracil: step 2/3. Inhibited by cyanuric acid. Its function is as follows. Responsible for the hydrolysis of barbituric acid (2,4,6-trihydroxy-1,3-pyrimidine), an intermediate in the oxidative catabolism of pyrimidines. Catalyzes the hydrolytic opening of the pyrimidine ring of barbituric acid to yield ureidomalonic acid. This chain is Barbiturase 1, found in Nocardioides sp. (strain ATCC BAA-499 / JS614).